The sequence spans 171 residues: Inosine/xanthosine triphosphatase (171 aa).

A substrate-binding site is contributed by 8–13 (TTNPAK). Mg(2+) is bound at residue E38.

Belongs to the YjjX NTPase family. In terms of assembly, homodimer. Mg(2+) serves as cofactor. Requires Mn(2+) as cofactor.

The enzyme catalyses XTP + H2O = XDP + phosphate + H(+). The catalysed reaction is ITP + H2O = IDP + phosphate + H(+). In terms of biological role, phosphatase that hydrolyzes non-canonical purine nucleotides such as XTP and ITP to their respective diphosphate derivatives. Probably excludes non-canonical purines from DNA/RNA precursor pool, thus preventing their incorporation into DNA/RNA and avoiding chromosomal lesions. In Klebsiella pneumoniae (strain 342), this protein is Inosine/xanthosine triphosphatase.